Reading from the N-terminus, the 179-residue chain is Large ribosomal subunit protein uL6 (179 aa).

This sequence belongs to the universal ribosomal protein uL6 family. Part of the 50S ribosomal subunit.

Functionally, this protein binds to the 23S rRNA, and is important in its secondary structure. It is located near the subunit interface in the base of the L7/L12 stalk, and near the tRNA binding site of the peptidyltransferase center. The chain is Large ribosomal subunit protein uL6 from Bifidobacterium longum (strain DJO10A).